Here is a 277-residue protein sequence, read N- to C-terminus: Proteasome assembly chaperone 1 (277 aa).

Belongs to the PSMG1 family. As to quaternary structure, forms a heterodimer with psmg2. In terms of processing, degraded by the proteasome upon completion of 20S proteasome maturation.

Its subcellular location is the cytoplasm. The protein localises to the endoplasmic reticulum. In terms of biological role, chaperone protein which promotes assembly of the 20S proteasome as part of a heterodimer with psmg2. In Danio rerio (Zebrafish), this protein is Proteasome assembly chaperone 1.